The sequence spans 287 residues: Nucleotide-binding protein Ppro_0977 (287 aa).

Position 8-15 (8-15) interacts with ATP; sequence GMSGSGKS. 59–62 contacts GTP; the sequence is DIRG.

The protein belongs to the RapZ-like family.

In terms of biological role, displays ATPase and GTPase activities. This chain is Nucleotide-binding protein Ppro_0977, found in Pelobacter propionicus (strain DSM 2379 / NBRC 103807 / OttBd1).